The primary structure comprises 422 residues: Glutamyl-tRNA reductase (422 aa).

Substrate is bound by residues threonine 49–arginine 52, serine 110, glutamate 115–glutamine 117, and glutamine 121. The Nucleophile role is filled by cysteine 50. An NADP(+)-binding site is contributed by glycine 190–isoleucine 195.

This sequence belongs to the glutamyl-tRNA reductase family. Homodimer.

It carries out the reaction (S)-4-amino-5-oxopentanoate + tRNA(Glu) + NADP(+) = L-glutamyl-tRNA(Glu) + NADPH + H(+). It participates in porphyrin-containing compound metabolism; protoporphyrin-IX biosynthesis; 5-aminolevulinate from L-glutamyl-tRNA(Glu): step 1/2. Catalyzes the NADPH-dependent reduction of glutamyl-tRNA(Glu) to glutamate 1-semialdehyde (GSA). The chain is Glutamyl-tRNA reductase from Colwellia psychrerythraea (strain 34H / ATCC BAA-681) (Vibrio psychroerythus).